We begin with the raw amino-acid sequence, 409 residues long: LL-diaminopimelate aminotransferase (409 aa).

Substrate is bound by residues Tyr-15 and Gly-42. Pyridoxal 5'-phosphate is bound by residues Tyr-72, 108 to 109 (AK), Tyr-132, Asn-186, Tyr-217, and 245 to 247 (SFS). Residues Lys-109, Tyr-132, and Asn-186 each coordinate substrate. The residue at position 248 (Lys-248) is an N6-(pyridoxal phosphate)lysine. Pyridoxal 5'-phosphate contacts are provided by Arg-256 and Asn-291. Substrate-binding residues include Asn-291 and Arg-385.

Belongs to the class-I pyridoxal-phosphate-dependent aminotransferase family. LL-diaminopimelate aminotransferase subfamily. As to quaternary structure, homodimer. Pyridoxal 5'-phosphate is required as a cofactor.

The catalysed reaction is (2S,6S)-2,6-diaminopimelate + 2-oxoglutarate = (S)-2,3,4,5-tetrahydrodipicolinate + L-glutamate + H2O + H(+). It participates in amino-acid biosynthesis; L-lysine biosynthesis via DAP pathway; LL-2,6-diaminopimelate from (S)-tetrahydrodipicolinate (aminotransferase route): step 1/1. Functionally, involved in the synthesis of meso-diaminopimelate (m-DAP or DL-DAP), required for both lysine and peptidoglycan biosynthesis. Catalyzes the direct conversion of tetrahydrodipicolinate to LL-diaminopimelate. In Desulfosudis oleivorans (strain DSM 6200 / JCM 39069 / Hxd3) (Desulfococcus oleovorans), this protein is LL-diaminopimelate aminotransferase.